Reading from the N-terminus, the 1165-residue chain is MSEISYLSINNAHNGIIIKIPKPVRFHTLSEFKKYIQQSYSIDSVDNLFLLTTFGIKLNYNLINEIGEVFVYDKRLFTNIVDQSLIDQYTQSTFRVSEPTHSPLLKSNVGFLKQNLSSNLKINQGWARIITQDGELMDQYCRELIQQINVIFKCLNTIFQFATNFTNEIEKNFSNFFNYVKLINYKTLHKSWITNYKNLKTFPTFKIDNENIKLSDFLEVDRLQSSADYIEKFLPLIVNKLNELKQVIETVNEEKLTVDKFIETSRNESISNFKNVNISNVLSQLQTESQQLTDDIENLHYKNMDEIYRLHRDKLSISIYNNAKDIYKNLNDLQQFKNKLTKASLKAFNTIANLQMKMVGVKTEMKKITTEDETATEDSKVGDVNYKTISNVKKYEDYLSLTIDLPLIFGFSLIEKRRQFEWYDFYSKGIVNNVSEQLSTIIEHEKVFRGIWLKKFGTLLSLINDDPLTPSLPNIDVTLVGNRQNNFSILYDLKIERDDIINYISLIEATNMSKNFVTLLNKNFKDLIASTNNMKKVTKVISSLSTYTTNSADDKSKSSHEEGTEEEIDFDLNLIKGLKSRIKKLENLLHQQQFKNLNNWPVIRNVPSMTNDNRQSTIIQPTVVSPARTNPTQLLSRNPSTTKENTTTNIHNNHQQSEVLDSSVIDKHLDNIRLKKLNNELQTKNTELTNQINSKNETITQQQKEMEHMKLKTEKRVDELMKKLQEKDEECQSLKQENKIKCDEVENLTKKLELSDNHNKELEAKITEYTQKATSKTKEIADLNKTVSNLRSELGDAMHMKNDLLSNLSSKEAEFTKERNQFNNDLKALQLKLDEINEDYENLMELTQAKQKKHDLIINDLNNVIINLMNDIKKTLLSVFEYFLEYCLVLESMGLLLVKEDEIYKIKRVKGLKSKKSIGDGDMSIISNGTPSSKVIEEIENEINIVNNIPPISSILPDSYSSGTESDSVVDRYNDQSMKLISTFNQLFKFNNENENENRIDHILNTLAFKNNVQLQEDSINDTRFFLNAISKRFRDVEGFAKRQAKDNKLKEQEHRKLVHRLNSKISVNGFQEKDLVLFLPTRIDRPNGENIPSNDKIQPWAAFNIGAPHYFLKTEQTKNKEWIIGRVKKITEYKVTEENVQSLESNPFQLSVNVTWYLVEADEE.

2 coiled-coil regions span residues 239-304 (NKLN…YKNM) and 670-853 (DNIR…KQKK).

It belongs to the ATG11 family. As to quaternary structure, homodimer and potential homooligomers.

The protein resides in the preautophagosomal structure membrane. Functionally, plays an essential role in both non-selective and selective autophagy such as mitophagy. Recruits mitochondria for their selective degradation via autophagy (mitophagy) during starvation, through its interaction with ATG32. Works as scaffold proteins that recruit ATG proteins to the pre-autophagosome (PAS), the site of vesicle/autophagosome formation. Required for ATG9 anterograde transport from the mitochondria to the PAS. The sequence is that of Autophagy-related protein 11 from Candida albicans (strain SC5314 / ATCC MYA-2876) (Yeast).